Reading from the N-terminus, the 568-residue chain is MSVRYSSSKQYSSSRSGGGGGGGGGSSFRISSSKGSIGGGFSSGGFSGGSFSRGSSGGGCFGGSSGGYGGLGGGFGGGNFGGGYGSSSFGGGYGGVSFGGGSFGGGSFGGGGFSGGSFGGYGGGYGGDGGLLSGNEKVTMQNLNDRLASYLDKVRALEESNYELEGKIKEWYEKHGNSSQRAPRDYSKYYQTIEDLKNQILNLTTDNANILLQIDNARLAADDFRLKYENEVALRQSVEADINGLRRVLDELTLTKADLEMQIESLTEELAYLKKNHEEEMRDLQNVSTGDVNVEMNAAPGVDLTELLNNMRNQYEQLAEQNRKDAEAWFNEKSKELTTEINSNIEQMSSHKSEITELRRTVQGLEIELQSQLALKQSLEGSLAETEGRYCVQLSQIQAQISSLEEQLQQIRAETECQNAEYQQLLDIKIRLENEIQTYRSLLEGEGSSGGGGYGGGRGGGSSGGGYGGSSGGGYGGSSGGGGYGGGSSGGGGHIGGHSGGHSGSSGGGYGGGSSSGGGGYGGGSSGGGGSHGGSSGGGYGGGSSSSGGHKSSSSGSVGESSSKGPRY.

Positions 1-15 (MSVRYSSSKQYSSSR) are enriched in low complexity. Residues 1-31 (MSVRYSSSKQYSSSRSGGGGGGGGGSSFRIS) are disordered. The head stretch occupies residues 1–135 (MSVRYSSSKQ…GGDGGLLSGN (135 aa)). Ser-14, Ser-16, Ser-36, Ser-47, Ser-50, and Ser-160 each carry phosphoserine. A compositionally biased stretch (gly residues) spans 16 to 26 (SGGGGGGGGGS). Positions 136-171 (EKVTMQNLNDRLASYLDKVRALEESNYELEGKIKEW) are coil 1A. The IF rod domain maps to 136-450 (EKVTMQNLND…SLLEGEGSSG (315 aa)). Residues 172-192 (YEKHGNSSQRAPRDYSKYYQT) are linker 1. Residues 193–284 (IEDLKNQILN…KNHEEEMRDL (92 aa)) are coil 1B. Residues 285–307 (QNVSTGDVNVEMNAAPGVDLTEL) form a linker 12 region. A coil 2 region spans residues 308–446 (LNNMRNQYEQ…QTYRSLLEGE (139 aa)). A tail region spans residues 447–568 (GSSGGGGYGG…GESSSKGPRY (122 aa)). Gly residues predominate over residues 485–546 (GGGSSGGGGH…GGGYGGGSSS (62 aa)). The segment at 485-568 (GGGSSGGGGH…GESSSKGPRY (84 aa)) is disordered. Over residues 547–568 (SGGHKSSSSGSVGESSSKGPRY) the composition is skewed to low complexity.

It belongs to the intermediate filament family. In terms of assembly, heterotetramer of two type I and two type II keratins. Heterodimer with KRT1. Two heterodimers of KRT1 and KRT10 form a heterotetramer. The KRT10 subunit in the heterotetramer is probably disulfide-linked. As to expression, expressed in skin.

It localises to the secreted. The protein localises to the extracellular space. The protein resides in the cell surface. Its subcellular location is the cytoplasm. Its function is as follows. Plays a role in the establishment of the epidermal barrier on plantar skin. Involved in the maintenance of cell layer development and keratin filament bundles in suprabasal cells of the epithelium. This is Keratin, type I cytoskeletal 10 from Canis lupus familiaris (Dog).